We begin with the raw amino-acid sequence, 452 residues long: Eukaryotic peptide chain release factor subunit 1 (452 aa).

The protein belongs to the eukaryotic release factor 1 family. As to quaternary structure, heterodimer of two subunits, one of which binds GTP.

The protein resides in the cytoplasm. In terms of biological role, directs the termination of nascent peptide synthesis (translation) in response to the termination codons UAA, UAG and UGA. The sequence is that of Eukaryotic peptide chain release factor subunit 1 (ERF1) from Trypanosoma brucei brucei.